A 157-amino-acid polypeptide reads, in one-letter code: Protein Smg (157 aa).

This sequence belongs to the Smg family.

This Enterobacter sp. (strain 638) protein is Protein Smg.